Here is a 378-residue protein sequence, read N- to C-terminus: Chaperone protein DnaJ (378 aa).

Residues 5–70 (DYYESLGVAK…QKRAAYDQYG (66 aa)) enclose the J domain. The CR-type zinc-finger motif lies at 133–211 (GVTKEIRIPA…CHGHGRVEKS (79 aa)). Zn(2+) is bound by residues C146, C149, C163, C166, C185, C188, C199, and C202. CXXCXGXG motif repeat units follow at residues 146-153 (CDVCHGNG), 163-170 (CPTCHGNG), 185-192 (CPHCHGRG), and 199-206 (CVKCHGHG).

This sequence belongs to the DnaJ family. As to quaternary structure, homodimer. Zn(2+) serves as cofactor.

The protein resides in the cytoplasm. Functionally, participates actively in the response to hyperosmotic and heat shock by preventing the aggregation of stress-denatured proteins and by disaggregating proteins, also in an autonomous, DnaK-independent fashion. Unfolded proteins bind initially to DnaJ; upon interaction with the DnaJ-bound protein, DnaK hydrolyzes its bound ATP, resulting in the formation of a stable complex. GrpE releases ADP from DnaK; ATP binding to DnaK triggers the release of the substrate protein, thus completing the reaction cycle. Several rounds of ATP-dependent interactions between DnaJ, DnaK and GrpE are required for fully efficient folding. Also involved, together with DnaK and GrpE, in the DNA replication of plasmids through activation of initiation proteins. In Pectobacterium carotovorum subsp. carotovorum (strain PC1), this protein is Chaperone protein DnaJ.